A 644-amino-acid chain; its full sequence is MFQDNPLLAQLKQQLHSQTPRAEGVVKATEKGFGFLEVDAQKSYFIPPPQMKKVMHGDRIIAVIHSEKERESAEPEELVEPFLTRFVGKVQGKNDRLAIVPDHPLLKDAIPCRAARGLNHEFKEGDWAVAEMRRHPLKGDRSFYAELTQYITFGDDHFVPWWVTLARHNLEKEAPDGVATEMLDEGLVREDLTALDFVTIDSASTEDMDDALFAKALPDDKLQLIVAIADPTAWIAEGSKLDKAAKIRAFTNYLPGFNIPMLPRELSDDLCSLRANEVRPVLACRMTLSADGAIEDNIEFFAATIESKAKLVYDQVSDWLENTGDWQPESEAIAEQVRLLAQICQRRGEWRHNHALVFKDRPDYRFILGEKGEVLDIVAEPRRIANRIVEEAMIAANICAARVLRDKLGFGIYNVHMGFDPANADALAALLKTHGLHVDAEEVLTLDGFCKLRRELDAQPTGFLDSRIRRFQSFAEISTEPGPHFGLGLEAYATWTSPIRKYGDMINHRLLKAVIKGETATRPQDEITVQMAERRRLNRMAERDVGDWLYARFLKDKAGTDTRFAAEIVDISRGGMRVRLVDNGAIAFIPAPFLHAMRDELVCSQENGTVQIKGETVYKVTDVIDVTIAEVRMETRSIIARPVA.

The RNB domain occupies 189 to 516; sequence REDLTALDFV…NHRLLKAVIK (328 aa). One can recognise an S1 motif domain in the interval 561-643; it reads DTRFAAEIVD…ETRSIIARPV (83 aa).

The protein belongs to the RNR ribonuclease family. RNase II subfamily.

It is found in the cytoplasm. It catalyses the reaction Exonucleolytic cleavage in the 3'- to 5'-direction to yield nucleoside 5'-phosphates.. Its function is as follows. Involved in mRNA degradation. Hydrolyzes single-stranded polyribonucleotides processively in the 3' to 5' direction. This Shigella boydii serotype 18 (strain CDC 3083-94 / BS512) protein is Exoribonuclease 2.